The chain runs to 516 residues: Probable fucosyltransferase 8 (516 aa).

A helical; Signal-anchor for type II membrane protein membrane pass occupies residues 5 to 25 (ITVVTCLFLLSVMQLSFFNIF). At 26 to 516 (NYQLLDATTN…ITGLKLVDSN (491 aa)) the chain is on the lumenal side. Asn35, Asn116, Asn211, Asn362, and Asn463 each carry an N-linked (GlcNAc...) asparagine glycan.

It belongs to the glycosyltransferase 37 family. In terms of tissue distribution, expressed in leaves and stems.

The protein resides in the golgi apparatus. Its subcellular location is the golgi stack membrane. It participates in protein modification; protein glycosylation. May be involved in cell wall biosynthesis. May act as a fucosyltransferase. The polypeptide is Probable fucosyltransferase 8 (FUT8) (Arabidopsis thaliana (Mouse-ear cress)).